The sequence spans 971 residues: Exportin-2 (971 aa).

Position 1 is an N-acetylmethionine (Met1). The Importin N-terminal domain occupies 29–102 (AEKFLESVEG…KANIVHLMLS (74 aa)). Phosphoserine is present on Ser112. Lys574 and Lys824 each carry N6-acetyllysine. Ser931 is subject to Phosphoserine.

Belongs to the XPO2/CSE1 family. Found in a complex with CSE1L/XPO2, Ran and KPNA2. Binds with high affinity to importin-alpha only in the presence of RanGTP. The complex is dissociated by the combined action of RanBP1 and RanGAP1. Interacts with CFTR.

The protein resides in the cytoplasm. It is found in the nucleus. Export receptor for importin-alpha. Mediates importin-alpha re-export from the nucleus to the cytoplasm after import substrates (cargos) have been released into the nucleoplasm. In the nucleus binds cooperatively to importin-alpha and to the GTPase Ran in its active GTP-bound form. Docking of this trimeric complex to the nuclear pore complex (NPC) is mediated through binding to nucleoporins. Upon transit of a nuclear export complex into the cytoplasm, disassembling of the complex and hydrolysis of Ran-GTP to Ran-GDP (induced by RANBP1 and RANGAP1, respectively) cause release of the importin-alpha from the export receptor. CSE1L/XPO2 then return to the nuclear compartment and mediate another round of transport. The directionality of nuclear export is thought to be conferred by an asymmetric distribution of the GTP- and GDP-bound forms of Ran between the cytoplasm and nucleus. In Pongo abelii (Sumatran orangutan), this protein is Exportin-2 (CSE1L).